The chain runs to 140 residues: 3-hydroxyacyl-[acyl-carrier-protein] dehydratase FabZ (140 aa).

H47 is a catalytic residue.

The protein belongs to the thioester dehydratase family. FabZ subfamily.

The protein resides in the cytoplasm. The catalysed reaction is a (3R)-hydroxyacyl-[ACP] = a (2E)-enoyl-[ACP] + H2O. In terms of biological role, involved in unsaturated fatty acids biosynthesis. Catalyzes the dehydration of short chain beta-hydroxyacyl-ACPs and long chain saturated and unsaturated beta-hydroxyacyl-ACPs. The sequence is that of 3-hydroxyacyl-[acyl-carrier-protein] dehydratase FabZ from Streptococcus pneumoniae (strain CGSP14).